The sequence spans 794 residues: MKFSESWLRTLVDPKLSSEELSHLLTMAGLEVEELDPVAPAFDNVVVAHVLDVVKHPDADRLNVCQVDTGSGAPTTIVCGAPNVAVGLKVPCALPGAKLPGDFTIKIAKVRGIESSGMLCSAKELGIAEEASGLLVLPSDAPVGQAIRQYLDLDDNLFELKLTPNRADCLSLLGIAREVGAITGAATSLPVVPEVVASIADSRAVVLDAPEACPLYCGRVLKGVNAKAPTPEWMKRRLERSGIRAISALVDVTNYVMLELGQPLHAFDNTRLEGAVHARLAKPEEKLLLLNEQTIAVDADVLVIADDVKPLAMAGIMGGEESGITLETSELFLESAFFAPKAIAGRARRYGFGSDASHRFERGVDFGGARRAIERATQLILEICGGQAGPVVEAKAVLPVRKPVLLRTARAEMVLGLPLGAERIAGLFAGLDLSFVCEGDNFQVTPPSWRFDMEVEEDLIEEIARLYGYDNIPSVSPRGALKMQVQPEARRPAYRLRQMLADRGYQEVVNFAFVEAAWEADFAENVAEAELIRLANPIASQMAVMRSTLFGGLISNLITNLKRKQTRVRLFEVGRTFHRAADAVPVNGFHQPWKLAGLAFGGALPEGWGSGARKVDFYDVKGDIEALLAPAVLRFEKLAHPALHPGRAARILFDGRDIGCIGEVHPEWVQKYDLPQAPVVFELDFDAVKAANVPAYAEVSKFPPVIRDLAIVVDQNVVLQTLLDGLKGQVSDLIQDIQLFDVYVGKGVPENKKSLAFRIVMQDTQRTLQDSEVDAAMQQLVSCFEQAFGAQLRA.

In terms of domain architecture, tRNA-binding spans 39 to 148 (APAFDNVVVA…SDAPVGQAIR (110 aa)). The region spanning 399-474 (PVRKPVLLRT…RLYGYDNIPS (76 aa)) is the B5 domain. Mg(2+)-binding residues include D452, D458, E461, and E462. In terms of domain architecture, FDX-ACB spans 700–793 (SKFPPVIRDL…FEQAFGAQLR (94 aa)).

Belongs to the phenylalanyl-tRNA synthetase beta subunit family. Type 1 subfamily. As to quaternary structure, tetramer of two alpha and two beta subunits. Mg(2+) serves as cofactor.

Its subcellular location is the cytoplasm. The catalysed reaction is tRNA(Phe) + L-phenylalanine + ATP = L-phenylalanyl-tRNA(Phe) + AMP + diphosphate + H(+). In Dechloromonas aromatica (strain RCB), this protein is Phenylalanine--tRNA ligase beta subunit.